Reading from the N-terminus, the 450-residue chain is MFLKNQNIHFVGIGGSGMSGIAEVLINLGHRVSGSDLKKTDVTEYLKAVGAKIYIGHSCKNIKSAEVVVTSTAISRNNPEVVAALKKRIPIIARIEMLVELARLKYAVTITGTHGKTTTTSLTSLVLHNGGLDPTIVIGGRLKNLKTNAKLGRGDYIVVEADESDGSFLRLSPIITVVTNIDNDHLDYYDSMENLKEAFVKHINCIPFYGTAIICSDNEVVRKIIPQITRRYITYGLMGNPDIKASNIKVLKNHTSFDVFYMRKKVGSVCMKILGKHNVSNSLAAIGVGLRLGISFSSIADTINKFDGVSRRLEIKGEKNGMMVIDDYGHHPTEVAATLRAIKLFWPERRLVVLFQPHRYTRTKQLFNEFGRSFSDADFVKVLDIYSAGEQPIDEVTSDLILESLVSNKCKAEKFSDLEEFSKGLSVGDVVLTLGAGDVWKKGEELLALI.

112–118 (GTHGKTT) serves as a coordination point for ATP.

The protein belongs to the MurCDEF family.

The protein localises to the cytoplasm. The catalysed reaction is UDP-N-acetyl-alpha-D-muramate + L-alanine + ATP = UDP-N-acetyl-alpha-D-muramoyl-L-alanine + ADP + phosphate + H(+). The protein operates within cell wall biogenesis; peptidoglycan biosynthesis. In terms of biological role, cell wall formation. The chain is UDP-N-acetylmuramate--L-alanine ligase from Endomicrobium trichonymphae.